Reading from the N-terminus, the 434-residue chain is APETALA2-like protein 2 (434 aa).

The tract at residues 1–116 (MLLDLNVESP…KTRRGPRSRS (116 aa)) is disordered. Low complexity predominate over residues 12–23 (RSGTSSSSVLNS). The segment covering 25-38 (DAGGGGGGGGGGGL) has biased composition (gly residues). A compositionally biased stretch (pro residues) spans 72-87 (LPPPPPAAPSPAPAWQ). A compositionally biased stretch (basic residues) spans 104 to 113 (VAKKTRRGPR). The Nuclear localization signal motif lies at 106–115 (KKTRRGPRSR). 2 consecutive DNA-binding regions (AP2/ERF) follow at residues 118 to 174 (QYRG…INFN) and 210 to 267 (KFRG…TNFE). An EAR motif is present at residues 291–295 (LDLRI).

It belongs to the AP2/ERF transcription factor family. AP2 subfamily. In terms of assembly, may form homodimer. Interacts with TPR2/ASP1.

The protein resides in the nucleus. Functionally, probable transcription factor. Involved in spikelet transition. Together with SNB, controls synergistically inflorescence architecture and floral meristem establishment via the regulation of spatio-temporal expression of B- and E-function floral organ identity genes in the lodicules and of spikelet meristem genes. Prevents lemma and palea elongation as well as grain growth. The protein is APETALA2-like protein 2 of Oryza sativa subsp. indica (Rice).